The chain runs to 382 residues: Homoserine O-succinyltransferase (382 aa).

Residues 51 to 359 (NAILVCHALS…EATQGHDAFL (309 aa)) form the AB hydrolase-1 domain. Serine 157 acts as the Nucleophile in catalysis. Substrate is bound at residue arginine 227. Active-site residues include aspartate 322 and histidine 355. Aspartate 356 contacts substrate.

The protein belongs to the AB hydrolase superfamily. MetX family. Homodimer.

The protein localises to the cytoplasm. The catalysed reaction is L-homoserine + succinyl-CoA = O-succinyl-L-homoserine + CoA. The protein operates within amino-acid biosynthesis; L-methionine biosynthesis via de novo pathway; O-succinyl-L-homoserine from L-homoserine: step 1/1. Functionally, transfers a succinyl group from succinyl-CoA to L-homoserine, forming succinyl-L-homoserine. This chain is Homoserine O-succinyltransferase, found in Halorhodospira halophila (strain DSM 244 / SL1) (Ectothiorhodospira halophila (strain DSM 244 / SL1)).